We begin with the raw amino-acid sequence, 147 residues long: Succinate dehydrogenase assembly factor 2, mitochondrial (147 aa).

This sequence belongs to the SDHAF2 family. In terms of assembly, interacts with the flavoprotein subunit within the SDH catalytic dimer.

It localises to the mitochondrion matrix. Its function is as follows. Plays an essential role in the assembly of succinate dehydrogenase (SDH), an enzyme complex (also referred to as respiratory complex II) that is a component of both the tricarboxylic acid (TCA) cycle and the mitochondrial electron transport chain, and which couples the oxidation of succinate to fumarate with the reduction of ubiquinone (coenzyme Q) to ubiquinol. Required for flavinylation (covalent attachment of FAD) of the flavoprotein subunit of the SDH catalytic dimer. This is Succinate dehydrogenase assembly factor 2, mitochondrial from Drosophila grimshawi (Hawaiian fruit fly).